The sequence spans 305 residues: Dermonecrotic toxin LiSicTox-alphaIA2aiii (305 aa).

The signal sequence occupies residues 1-17 (LPYIALILVCWSVLSQA). The propeptide occupies 18-25 (AQTDVEER). The active site involves histidine 37. Mg(2+) is bound by residues glutamate 57 and aspartate 59. Histidine 73 functions as the Nucleophile in the catalytic mechanism. 2 disulfide bridges follow: cysteine 77/cysteine 83 and cysteine 79/cysteine 222. Residue aspartate 117 coordinates Mg(2+). A glycan (N-linked (GlcNAc...) asparagine) is linked at asparagine 282.

Belongs to the arthropod phospholipase D family. Class II subfamily. The cofactor is Mg(2+). Expressed by the venom gland.

It localises to the secreted. It catalyses the reaction an N-(acyl)-sphingosylphosphocholine = an N-(acyl)-sphingosyl-1,3-cyclic phosphate + choline. The enzyme catalyses an N-(acyl)-sphingosylphosphoethanolamine = an N-(acyl)-sphingosyl-1,3-cyclic phosphate + ethanolamine. The catalysed reaction is a 1-acyl-sn-glycero-3-phosphocholine = a 1-acyl-sn-glycero-2,3-cyclic phosphate + choline. It carries out the reaction a 1-acyl-sn-glycero-3-phosphoethanolamine = a 1-acyl-sn-glycero-2,3-cyclic phosphate + ethanolamine. In terms of biological role, dermonecrotic toxins cleave the phosphodiester linkage between the phosphate and headgroup of certain phospholipids (sphingolipid and lysolipid substrates), forming an alcohol (often choline) and a cyclic phosphate. This toxin acts on sphingomyelin (SM). It may also act on ceramide phosphoethanolamine (CPE), lysophosphatidylcholine (LPC) and lysophosphatidylethanolamine (LPE), but not on lysophosphatidylserine (LPS), and lysophosphatidylglycerol (LPG). It acts by transphosphatidylation, releasing exclusively cyclic phosphate products as second products. Induces dermonecrosis, hemolysis, increased vascular permeability, edema, inflammatory response, and platelet aggregation. This Loxosceles intermedia (Brown spider) protein is Dermonecrotic toxin LiSicTox-alphaIA2aiii.